Here is a 214-residue protein sequence, read N- to C-terminus: GTP-binding nuclear protein Ran (214 aa).

Residues 6 to 170 (YIPQYKLILV…LWLARRLSNQ (165 aa)) form the Small GTPase Ran-type domain. 17–24 (DGGVGKTT) serves as a coordination point for GTP. Positions 36–44 (KKYIPTLGV) are switch-I. GTP is bound by residues glycine 67, 121 to 124 (NKVD), and 149 to 151 (SAR). Residues 67–83 (GQEKFGGLRDGYYIKSD) form a switch-II region.

The protein belongs to the small GTPase superfamily. Ran family. As to quaternary structure, found in a nuclear export complex with RanGTP, exportin and pre-miRNA.

The protein resides in the nucleus. In terms of biological role, GTP-binding protein involved in nucleocytoplasmic transport. Required for the import of protein into the nucleus and also for RNA export. Involved in chromatin condensation and control of cell cycle. In Plasmodium falciparum, this protein is GTP-binding nuclear protein Ran.